Here is a 425-residue protein sequence, read N- to C-terminus: Tyrosine--tRNA ligase (425 aa).

L-tyrosine is bound at residue Y37. Positions 42–51 (PTADSLHLGH) match the 'HIGH' region motif. Residues Y175 and Q179 each coordinate L-tyrosine. The 'KMSKS' region motif lies at 235-239 (KFGKT). K238 lines the ATP pocket. The region spanning 357–415 (QDLQQALVNAELAPSRGQARKLIEAKSVSINGSLQTDAEYTFGEDDRLFGQYTLLRRGK) is the S4 RNA-binding domain.

The protein belongs to the class-I aminoacyl-tRNA synthetase family. TyrS type 1 subfamily. As to quaternary structure, homodimer.

It localises to the cytoplasm. It carries out the reaction tRNA(Tyr) + L-tyrosine + ATP = L-tyrosyl-tRNA(Tyr) + AMP + diphosphate + H(+). Its function is as follows. Catalyzes the attachment of tyrosine to tRNA(Tyr) in a two-step reaction: tyrosine is first activated by ATP to form Tyr-AMP and then transferred to the acceptor end of tRNA(Tyr). The polypeptide is Tyrosine--tRNA ligase (Erwinia tasmaniensis (strain DSM 17950 / CFBP 7177 / CIP 109463 / NCPPB 4357 / Et1/99)).